The primary structure comprises 417 residues: MSLSNKLTLDKLDVKGKRVVMRVDFNVPMKNNQITNNQRIKAAVPSIKFCLDNGAKSVVLMSHLGRPDGVPMPDKYSLEPVAAELKSLLGKDVLFLKDCVGPEVENACANPAAGTVILLENLRFHVEEEGKGKDASGNKIKAEPAKIDAFRASLSKLGDVYVNDAFGTAHRAHSSMVGVNLPQKAGGFLMKKELNYFAKALESPERPFLAILGGAKVADKIQLINNMLDKVNEMIIGGGMAFTFLKVLNNMEIGTSLYDEEGAKIVKDLMAKAEKNGVKITLPVDFVTADKFDENAKTGQATVASGIPAGWMGLDCGTESSKKYAEAVARAKQIVWNGPVGVFEWEAFARGTKSLMDEVVKATSRGCITIIGGGDTATCCAKWNTEDKVSHVSTGGGASLELLEGKVLPGVDALSNV.

S2 bears the N-acetylserine mark. 2 positions are modified to phosphoserine: S2 and S4. The residue at position 6 (K6) is an N6-succinyllysine. K11 is modified (N6-acetyllysine). (2R)-3-phosphoglycerate is bound by residues V23, D24, F25, N26, Q38, and R39. The segment at 38–43 is mitochondrial targeting region exposed following cis-trans isomerization by PIN1 and recognized by the TOM complex for mitochondrial translocation of the protein; it reads QRIKAA. N6-acetyllysine; alternate is present on K48. K48 is subject to N6-succinyllysine; alternate. S62, H63, G65, and R66 together coordinate (2R)-3-phosphoglycerate. Residue K75 is modified to N6-acetyllysine. Phosphotyrosine is present on Y76. N6-acetyllysine is present on residues K86 and K91. At K97 the chain carries N6-acetyllysine; alternate. Residue K97 is modified to N6-(2-hydroxyisobutyryl)lysine; alternate. Residues L122 and R123 each contribute to the (2R)-3-phosphoglycerate site. K131 bears the N6-acetyllysine; alternate mark. K131 is subject to N6-malonyllysine; alternate. Residue K146 is modified to N6-acetyllysine. Positions 170 and 171 each coordinate (2R)-3-phosphoglycerate. An N6-succinyllysine modification is found at K191. Position 196 is a phosphotyrosine (Y196). K199 carries the N6-acetyllysine modification. S203 is subject to Phosphoserine. ADP is bound at residue G214. G214 serves as a coordination point for CDP. Positions 215 and 216 each coordinate AMP. A215 contacts ATP. Position 215 (A215) interacts with Mg(2+). K216 carries the post-translational modification N6-(2-hydroxyisobutyryl)lysine. The Mg(2+) site is built by A218 and D219. D219 provides a ligand contact to CDP. K220 contacts AMP. K220 serves as a coordination point for ATP. Residue K220 is modified to N6-(2-hydroxyisobutyryl)lysine. G238 serves as a coordination point for ADP. Residue G238 participates in CDP binding. An AMP-binding site is contributed by G239. G239 serves as a coordination point for ATP. 2 positions are modified to N6-acetyllysine: K267 and K291. Residue G313 coordinates AMP. Residue G313 participates in ATP binding. K323 bears the N6-(2-hydroxyisobutyryl)lysine mark. CDP is bound by residues G338, V340, and F343. F343 contributes to the ADP binding site. E344 provides a ligand contact to AMP. E344 serves as a coordination point for ATP. Position 361 is an N6-acetyllysine (K361). D375 and T376 together coordinate ATP. D375 is a Mg(2+) binding site.

It belongs to the phosphoglycerate kinase family. In terms of assembly, monomer. Interacts with kinase MAPK1/ERK2; the interaction is direct, occurs under hypoxic conditions, and promotes its interaction with PIN1. Interacts with peptidyl-prolyl cis-trans isomerase PIN1; the interaction is direct, occurs under hypoxic conditions, and targets the protein to the mitochondrion by promoting interactions with the TOM complex. Interacts with mitochondrial circRNA mcPGK1 (via its 2nd stem-loop); the interaction is direct and targets the protein to the mitochondrion by promoting interactions with the TOM complex. Interacts with pyruvate dehydrogenase kinase PDK1; the interaction is direct, occurs under hypoxic conditions and leads to PDK1-mediated inhibition of pyruvate dehydrogenase complex activity. Mg(2+) is required as a cofactor. Post-translationally, phosphorylated at Ser-203 by MAPK1/ERK2 under hypoxic conditions, which promotes its mitochondrial targeting.

The protein localises to the cytoplasm. It is found in the cytosol. Its subcellular location is the mitochondrion matrix. It catalyses the reaction (2R)-3-phosphoglycerate + ATP = (2R)-3-phospho-glyceroyl phosphate + ADP. The catalysed reaction is L-seryl-[protein] + ATP = O-phospho-L-seryl-[protein] + ADP + H(+). The protein operates within carbohydrate degradation; glycolysis; pyruvate from D-glyceraldehyde 3-phosphate: step 2/5. Its function is as follows. Catalyzes one of the two ATP producing reactions in the glycolytic pathway via the reversible conversion of 1,3-diphosphoglycerate to 3-phosphoglycerate. Both L- and D- forms of purine and pyrimidine nucleotides can be used as substrates, but the activity is much lower on pyrimidines. In addition to its role as a glycolytic enzyme, it seems that PGK-1 acts as a polymerase alpha cofactor protein (primer recognition protein). Acts as a protein kinase when localized to the mitochondrion where it phosphorylates pyruvate dehydrogenase kinase PDK1 to inhibit pyruvate dehydrogenase complex activity and suppress the formation of acetyl-coenzyme A from pyruvate, and consequently inhibit oxidative phosphorylation and promote glycolysis. May play a role in sperm motility. The chain is Phosphoglycerate kinase 1 (PGK1) from Cricetulus griseus (Chinese hamster).